We begin with the raw amino-acid sequence, 132 residues long: Probable histone H2A.1 (132 aa).

Positions 1-22 are disordered; it reads MAGRGKTLGSGSAKKATTRSSK.

Belongs to the histone H2A family. The nucleosome is a histone octamer containing two molecules each of H2A, H2B, H3 and H4 assembled in one H3-H4 heterotetramer and two H2A-H2B heterodimers. The octamer wraps approximately 147 bp of DNA. In terms of processing, not ubiquitinated. Low level of expression; mainly in roots. Found in the root cap cells and in non dividing tissues of the plant, including the root elongation and maturation zones and the leaf veins.

Its subcellular location is the nucleus. The protein localises to the chromosome. In terms of biological role, core component of nucleosome. Nucleosomes wrap and compact DNA into chromatin, limiting DNA accessibility to the cellular machineries which require DNA as a template. Histones thereby play a central role in transcription regulation, DNA repair, DNA replication and chromosomal stability. DNA accessibility is regulated via a complex set of post-translational modifications of histones, also called histone code, and nucleosome remodeling. The polypeptide is Probable histone H2A.1 (Arabidopsis thaliana (Mouse-ear cress)).